The chain runs to 401 residues: Acetate kinase (401 aa).

Asparagine 9 serves as a coordination point for Mg(2+). Lysine 16 serves as a coordination point for ATP. Substrate is bound at residue arginine 88. The Proton donor/acceptor role is filled by aspartate 147. Residues 207-211 (HLGNG), 282-284 (DCR), and 333-337 (GIGEN) contribute to the ATP site. Glutamate 388 contacts Mg(2+).

Belongs to the acetokinase family. Homodimer. Requires Mg(2+) as cofactor. Mn(2+) is required as a cofactor.

The protein localises to the cytoplasm. The enzyme catalyses acetate + ATP = acetyl phosphate + ADP. The protein operates within metabolic intermediate biosynthesis; acetyl-CoA biosynthesis; acetyl-CoA from acetate: step 1/2. Catalyzes the formation of acetyl phosphate from acetate and ATP. Can also catalyze the reverse reaction. In Haemophilus influenzae (strain 86-028NP), this protein is Acetate kinase.